We begin with the raw amino-acid sequence, 1178 residues long: Mediator of RNA polymerase II transcription subunit 14 (1178 aa).

Positions 1-12 (MDNSVHNNSNTT) are enriched in polar residues. 2 disordered regions span residues 1–50 (MDNS…PITV) and 1064–1178 (LAGT…VVLD). Composition is skewed to low complexity over residues 1074-1112 (PTQI…QGAA) and 1119-1164 (HQLQ…AQQR).

The protein belongs to the Mediator complex subunit 14 family. As to quaternary structure, component of the Mediator complex.

Its subcellular location is the nucleus. Component of the Mediator complex, a coactivator involved in the regulated transcription of nearly all RNA polymerase II-dependent genes. Mediator functions as a bridge to convey information from gene-specific regulatory proteins to the basal RNA polymerase II transcription machinery. Mediator is recruited to promoters by direct interactions with regulatory proteins and serves as a scaffold for the assembly of a functional preinitiation complex with RNA polymerase II and the general transcription factors. The polypeptide is Mediator of RNA polymerase II transcription subunit 14 (RGR1) (Chaetomium globosum (strain ATCC 6205 / CBS 148.51 / DSM 1962 / NBRC 6347 / NRRL 1970) (Soil fungus)).